We begin with the raw amino-acid sequence, 950 residues long: UvrABC system protein A (950 aa).

42-49 (GLSGSGKS) serves as a coordination point for ATP. The C4-type zinc-finger motif lies at 262 to 289 (CPVCSYSLPELEPRLFSFNNPMGSCPTC). 2 consecutive ABC transporter domains span residues 319–596 (WDKR…EKSV) and 616–945 (VNPG…KYLK). An ATP-binding site is contributed by 649–656 (GVSGSGKS). The segment at 748–774 (CEACQGDGVIKVEMHFLPDVYVPCEVC) adopts a C4-type zinc-finger fold.

Belongs to the ABC transporter superfamily. UvrA family. Forms a heterotetramer with UvrB during the search for lesions.

Its subcellular location is the cytoplasm. Its function is as follows. The UvrABC repair system catalyzes the recognition and processing of DNA lesions. UvrA is an ATPase and a DNA-binding protein. A damage recognition complex composed of 2 UvrA and 2 UvrB subunits scans DNA for abnormalities. When the presence of a lesion has been verified by UvrB, the UvrA molecules dissociate. The polypeptide is UvrABC system protein A (Neisseria gonorrhoeae).